We begin with the raw amino-acid sequence, 333 residues long: Olfactory receptor 9S13 (333 aa).

Over 1-35 (MATAVHRNGSLTPVSLRVFVLVGFGGGALTQALLF) the chain is Extracellular. N-linked (GlcNAc...) asparagine glycosylation is present at Asn-8. Residues 36–56 (AVFLVLYVVTVLGNLTMIVVI) form a helical membrane-spanning segment. Topologically, residues 57-72 (TLDARLHSPMYFFLKN) are cytoplasmic. The chain crosses the membrane as a helical span at residues 73–93 (LSFVDLCYSSAIAPNALANFL). Over 94–106 (STSKVISFEACAT) the chain is Extracellular. A disulfide bridge links Cys-104 with Cys-196. Residues 107–127 (QFFFFSLLATTETFLLAVMAY) form a helical membrane-spanning segment. At 128–150 (DRFMAICSPLRYPVTMCPTTCTR) the chain is on the cytoplasmic side. The chain crosses the membrane as a helical span at residues 151 to 171 (LVLGTFCVGCLNSIVQTSLTF). The Extracellular segment spans residues 172–203 (QLPFCSSNRIDHFYCDVPPLLQLACASTALNE). The helical transmembrane segment at 204-224 (LFLFGLCGFIIVSTTLAVLVS) threads the bilayer. The Cytoplasmic segment spans residues 225 to 251 (YGYITVTILRMHSGSGRHKVFSTCGSH). The helical transmembrane segment at 252–272 (LTAVSLFYGTLFVMYAQPGAL) threads the bilayer. Residues 273 to 278 (TSMEQG) lie on the Extracellular side of the membrane. A helical transmembrane segment spans residues 279 to 299 (KVVSIFYTLVIPMLNPLIYSL). The Cytoplasmic portion of the chain corresponds to 300-333 (RNKDVKDALQRLGQRHSLVKAVRGCPAAGGNASV).

This sequence belongs to the G-protein coupled receptor 1 family.

It localises to the cell membrane. In terms of biological role, odorant receptor. The chain is Olfactory receptor 9S13 from Mus musculus (Mouse).